A 254-amino-acid chain; its full sequence is Protein Thf1 (254 aa).

Residues 183 to 217 are a coiled coil; sequence SDKLQKDLDLYRSNLEKMEQARITMEEAIQADRRK. Positions 213–227 are enriched in basic and acidic residues; sequence ADRRKREQREQEKLA. Residues 213 to 254 are disordered; sequence ADRRKREQREQEKLAKAAAAEAPAALEASSDNPEPETSETPS. Low complexity predominate over residues 228 to 240; sequence KAAAAEAPAALEA. Acidic residues predominate over residues 245–254; sequence PEPETSETPS.

The protein belongs to the THF1 family.

In terms of biological role, may be involved in photosynthetic membrane biogenesis. The polypeptide is Protein Thf1 (Synechococcus elongatus (strain ATCC 33912 / PCC 7942 / FACHB-805) (Anacystis nidulans R2)).